Here is a 987-residue protein sequence, read N- to C-terminus: Eukaryotic translation initiation factor 3 subunit A (987 aa).

The stretch at 93 to 122 (LHLATDKAEQARSQADALEEALDVDDLEAD) forms a coiled coil. Residues 316 to 513 (LQLIASSVVL…GVVIFGNLGI (198 aa)) form the PCI domain. Coiled-coil stretches lie at residues 556–742 (TVEK…EKNR) and 797–858 (LKIE…REEL). Basic and acidic residues predominate over residues 808–859 (QEEEEARKQEEAERLKKVEAERKANLDKAFEKQRQREIELEEKSRREREELL). The tract at residues 808 to 987 (QEEEEARKQE…GSSRPRPTQR (180 aa)) is disordered. Positions 872–894 (PTVTPVGTTAPAAAAAAAGAPAA) are enriched in low complexity. Polar residues-rich tracts occupy residues 905–916 (TEVSGPSAPTSS) and 976–987 (TFGSSRPRPTQR).

The protein belongs to the eIF-3 subunit A family. As to quaternary structure, component of the eukaryotic translation initiation factor 3 (eIF-3) complex. Binds to the translation initiation factor TIF3H1.

The protein localises to the cytoplasm. Its function is as follows. RNA-binding component of the eukaryotic translation initiation factor 3 (eIF-3) complex, which is involved in protein synthesis of a specialized repertoire of mRNAs and, together with other initiation factors, stimulates binding of mRNA and methionyl-tRNAi to the 40S ribosome. The eIF-3 complex specifically targets and initiates translation of a subset of mRNAs involved in cell proliferation. The chain is Eukaryotic translation initiation factor 3 subunit A (TIF3A1) from Arabidopsis thaliana (Mouse-ear cress).